The following is a 202-amino-acid chain: Dephospho-CoA kinase (202 aa).

The region spanning 4 to 201 (VVALTGGIAS…QKYLAMSRQN (198 aa)) is the DPCK domain. Residue 12-17 (ASGKTT) participates in ATP binding.

Belongs to the CoaE family.

It localises to the cytoplasm. It catalyses the reaction 3'-dephospho-CoA + ATP = ADP + CoA + H(+). Its pathway is cofactor biosynthesis; coenzyme A biosynthesis; CoA from (R)-pantothenate: step 5/5. Its function is as follows. Catalyzes the phosphorylation of the 3'-hydroxyl group of dephosphocoenzyme A to form coenzyme A. This chain is Dephospho-CoA kinase, found in Vibrio cholerae serotype O1 (strain ATCC 39315 / El Tor Inaba N16961).